The sequence spans 235 residues: uncharacterized protein (235 aa).

Residues 2-69 (CRLAKIISNA…KPRLWIYYKP (68 aa)) form the S4 RNA-binding domain. Asp102 (nucleophile) is an active-site residue.

The protein belongs to the pseudouridine synthase RsuA family.

The enzyme catalyses a uridine in RNA = a pseudouridine in RNA. This is an uncharacterized protein from Rickettsia prowazekii (strain Madrid E).